A 155-amino-acid chain; its full sequence is uncharacterized protein (155 aa).

Residues M1–A19 form the signal peptide.

This is an uncharacterized protein from Haemophilus influenzae (strain ATCC 51907 / DSM 11121 / KW20 / Rd).